The following is a 197-amino-acid chain: Elongation factor Ts (197 aa).

The interval 81-84 (TDFV) is involved in Mg(2+) ion dislocation from EF-Tu.

Belongs to the EF-Ts family.

Its subcellular location is the cytoplasm. Associates with the EF-Tu.GDP complex and induces the exchange of GDP to GTP. It remains bound to the aminoacyl-tRNA.EF-Tu.GTP complex up to the GTP hydrolysis stage on the ribosome. This is Elongation factor Ts from Persephonella marina (strain DSM 14350 / EX-H1).